We begin with the raw amino-acid sequence, 884 residues long: Translation initiation factor IF-2 (884 aa).

The tract at residues 93–288 is disordered; the sequence is VNTPEAEQAK…KGKRKPSTLQ (196 aa). Residues 99–209 are compositionally biased toward basic and acidic residues; sequence EQAKAEEQAQ…KMAAENEGKW (111 aa). Residues 216–229 are compositionally biased toward polar residues; it reads QTESADYHVTTSQH. Positions 231 to 246 are enriched in basic and acidic residues; the sequence is RAAEDENDAKVEGDRR. The segment covering 247-261 has biased composition (basic residues); sequence SRTRGGKATKQKKGN. Over residues 262 to 275 the composition is skewed to basic and acidic residues; the sequence is KLSESKADREEARA. The region spanning 383-552 is the tr-type G domain; sequence HRAPVVTIMG…LLQAEVLELK (170 aa). The G1 stretch occupies residues 392 to 399; the sequence is GHVDHGKT. 392–399 is a binding site for GTP; that stretch reads GHVDHGKT. Residues 417-421 are G2; sequence GITQH. The segment at 438–441 is G3; it reads DTPG. GTP-binding positions include 438-442 and 492-495; these read DTPGH and NKID. The G4 stretch occupies residues 492 to 495; that stretch reads NKID. Positions 528–530 are G5; the sequence is SAK.

The protein belongs to the TRAFAC class translation factor GTPase superfamily. Classic translation factor GTPase family. IF-2 subfamily.

It localises to the cytoplasm. In terms of biological role, one of the essential components for the initiation of protein synthesis. Protects formylmethionyl-tRNA from spontaneous hydrolysis and promotes its binding to the 30S ribosomal subunits. Also involved in the hydrolysis of GTP during the formation of the 70S ribosomal complex. The chain is Translation initiation factor IF-2 from Yersinia pestis bv. Antiqua (strain Antiqua).